A 289-amino-acid chain; its full sequence is Probable endonuclease 4 (289 aa).

Positions 75, 115, 153, 187, 190, 224, 237, 239, and 269 each coordinate Zn(2+).

This sequence belongs to the AP endonuclease 2 family. Requires Zn(2+) as cofactor.

The enzyme catalyses Endonucleolytic cleavage to 5'-phosphooligonucleotide end-products.. Functionally, endonuclease IV plays a role in DNA repair. It cleaves phosphodiester bonds at apurinic or apyrimidinic (AP) sites, generating a 3'-hydroxyl group and a 5'-terminal sugar phosphate. This is Probable endonuclease 4 from Chlamydia caviae (strain ATCC VR-813 / DSM 19441 / 03DC25 / GPIC) (Chlamydophila caviae).